The sequence spans 499 residues: Protein adenylyltransferase Fic (499 aa).

Residues 38–58 form a helical membrane-spanning segment; that stretch reads FHYFVIFASGSLFSGLMFGLL. 2 TPR repeats span residues 126–159 and 160–194; these read ALSSLKVAIEMKTMGKDDKAARLFQHALALSPKH and PEILTKYGEFLEHNQQDVVRADHYYYQALTVNPSH. Positions 251–256 match the Inhibitory (S/T)XXXE(G/N) motif motif; that stretch reads SVGIEG. Residues E255 and 337 to 340 contribute to the ATP site; that span reads VGGH. Positions 306–441 constitute a Fido domain; it reads ITLKDILEIH…IRPFVRFIAD (136 aa). H384 is a catalytic residue. Residues 388–395, 420–421, and N428 contribute to the ATP site; these read DGNGRTSR and YY.

Belongs to the fic family. Homodimer.

The protein localises to the membrane. It carries out the reaction L-tyrosyl-[protein] + ATP = O-(5'-adenylyl)-L-tyrosyl-[protein] + diphosphate. The enzyme catalyses L-threonyl-[protein] + ATP = 3-O-(5'-adenylyl)-L-threonyl-[protein] + diphosphate. The catalysed reaction is 3-O-(5'-adenylyl)-L-threonyl-[protein] + H2O = L-threonyl-[protein] + AMP + H(+). Its activity is regulated as follows. The side chain of Glu-255 determines which of the two opposing activities (AMPylase or de-AMPylase) will take place. In response to endoplasmic reticulum stress, mediates de-AMPylase activity. Adenylyltransferase activity is inhibited by the inhibitory helix present at the N-terminus: Glu-255 binds ATP and competes with ATP-binding at Arg-395, thereby preventing adenylyltransferase activity. In unstressed cells, disengagement of Glu-255 promotes adenylyltransferase activity. Activation dissociates ATP-binding from Glu-255, allowing ordered binding of the entire ATP moiety with the alpha-phosphate in an orientation that is productive for accepting an incoming target hydroxyl side chain. Its function is as follows. Protein that can both mediate the addition of adenosine 5'-monophosphate (AMP) to specific residues of target proteins (AMPylation), and the removal of the same modification from target proteins (de-AMPylation), depending on the context. The side chain of Glu-255 determines which of the two opposing activities (AMPylase or de-AMPylase) will take place. Acts as a key regulator of the unfolded protein response (UPR) by mediating AMPylation or de-AMPylation of Hsc70-3/BiP. In unstressed cells, acts as an adenylyltransferase by mediating AMPylation of Hsc70-3/BiP at 'Thr-518', thereby inactivating it. In response to endoplasmic reticulum stress, acts as a phosphodiesterase by mediating removal of ATP (de-AMPylation) from Hsc70-3/BiP at 'Thr-518', leading to restore HSPA5/BiP activity. The polypeptide is Protein adenylyltransferase Fic (Aedes aegypti (Yellowfever mosquito)).